The sequence spans 456 residues: MSTTRKRLFIKTYGCQMNVYDSDRMKDVLTPLGYESAETPEGADLVILNTCHIREKAAEKVYSELGRLRPLKDEKAASGGMTIAVAGCVAQAEGAEIMKRAPVVDLVVGPQTYHKLPELIAQAHRAKGEALDTEFEVEDKFDRLGSDRQVEGYSAFVTVQEGCDKFCTFCVVPYTRGAEWSRPVDQIVAEIRALAAKGIREVTLLGQNVNAFHGAPPSGREAEGAWGLGQLVRHVALIGGIERIRFTTSHPRDMDEVLIQAFADTPKLMPYFHLPVQAGSDKILKSMNRQHTAEEYVAIIDRLRAARPDIAISGDMIVGFPGETDADFEATLDLVRRVKFASCFSFKYSKRPGTPGAAMFNQVDEGVKSARLAVLQELLSDQQAAFNESMIGRTLPVLFEKPGRMGGQLHGRSPYLQSVHVDGPAELIGQVGEVRIEAASRNSLSGSLTGSKRSAA.

The MTTase N-terminal domain occupies 6–125 (KRLFIKTYGC…LPELIAQAHR (120 aa)). Residues C15, C51, C88, C163, C167, and C170 each coordinate [4Fe-4S] cluster. The region spanning 149-385 (QVEGYSAFVT…QELLSDQQAA (237 aa)) is the Radical SAM core domain. One can recognise a TRAM domain in the interval 388 to 450 (ESMIGRTLPV…RNSLSGSLTG (63 aa)).

Belongs to the methylthiotransferase family. MiaB subfamily. As to quaternary structure, monomer. The cofactor is [4Fe-4S] cluster.

It is found in the cytoplasm. It catalyses the reaction N(6)-dimethylallyladenosine(37) in tRNA + (sulfur carrier)-SH + AH2 + 2 S-adenosyl-L-methionine = 2-methylsulfanyl-N(6)-dimethylallyladenosine(37) in tRNA + (sulfur carrier)-H + 5'-deoxyadenosine + L-methionine + A + S-adenosyl-L-homocysteine + 2 H(+). Catalyzes the methylthiolation of N6-(dimethylallyl)adenosine (i(6)A), leading to the formation of 2-methylthio-N6-(dimethylallyl)adenosine (ms(2)i(6)A) at position 37 in tRNAs that read codons beginning with uridine. This Maricaulis maris (strain MCS10) (Caulobacter maris) protein is tRNA-2-methylthio-N(6)-dimethylallyladenosine synthase.